The chain runs to 605 residues: Cell wall integrity and stress response component 4 (605 aa).

Positions 1–26 (MQTSMVSAKVSIWLVCSVICSSLVRA) are cleaved as a signal peptide. Residues 27 to 110 (TQSVCSSQNT…DKDLFGYIYL (84 aa)) form the WSC domain. The segment at 151–305 (SPTLTSTSTT…PSSTTVTYTS (155 aa)) is disordered. 4 N-linked (GlcNAc...) asparagine glycosylation sites follow: Asn340, Asn386, Asn389, and Asn398. Positions 381-399 (RITNNNNSNTTNSNTPTNK) are enriched in low complexity. The segment at 381–404 (RITNNNNSNTTNSNTPTNKSTEKK) is disordered. A helical membrane pass occupies residues 415–435 (ATFVVVGVVCLVIICILIYLI). Asn479 is a glycosylation site (N-linked (GlcNAc...) asparagine). Residues 494 to 521 (GQIMSESPSPRQSTYSLTAGSPPNDPST) are disordered. The span at 497 to 521 (MSESPSPRQSTYSLTAGSPPNDPST) shows a compositional bias: polar residues. Residues Asn553 and Asn583 are each glycosylated (N-linked (GlcNAc...) asparagine).

Its subcellular location is the membrane. The polypeptide is Cell wall integrity and stress response component 4 (WSC4) (Saccharomyces cerevisiae (strain ATCC 204508 / S288c) (Baker's yeast)).